The chain runs to 159 residues: ATP synthase subunit b (159 aa).

Residues 8–28 traverse the membrane as a helical segment; the sequence is ILATIINFIILILILKHFFWD.

This sequence belongs to the ATPase B chain family. In terms of assembly, F-type ATPases have 2 components, F(1) - the catalytic core - and F(0) - the membrane proton channel. F(1) has five subunits: alpha(3), beta(3), gamma(1), delta(1), epsilon(1). F(0) has three main subunits: a(1), b(2) and c(10-14). The alpha and beta chains form an alternating ring which encloses part of the gamma chain. F(1) is attached to F(0) by a central stalk formed by the gamma and epsilon chains, while a peripheral stalk is formed by the delta and b chains.

It localises to the cell membrane. Functionally, f(1)F(0) ATP synthase produces ATP from ADP in the presence of a proton or sodium gradient. F-type ATPases consist of two structural domains, F(1) containing the extramembraneous catalytic core and F(0) containing the membrane proton channel, linked together by a central stalk and a peripheral stalk. During catalysis, ATP synthesis in the catalytic domain of F(1) is coupled via a rotary mechanism of the central stalk subunits to proton translocation. In terms of biological role, component of the F(0) channel, it forms part of the peripheral stalk, linking F(1) to F(0). This Clostridium perfringens (strain SM101 / Type A) protein is ATP synthase subunit b.